Reading from the N-terminus, the 174-residue chain is Co-chaperone protein HscB homolog (174 aa).

The J domain occupies 2–74 (NYFELFNLPV…IRRAEHMLAL (73 aa)).

The protein belongs to the HscB family. In terms of assembly, interacts with HscA and stimulates its ATPase activity.

Functionally, co-chaperone involved in the maturation of iron-sulfur cluster-containing proteins. Seems to help targeting proteins to be folded toward HscA. The polypeptide is Co-chaperone protein HscB homolog (Shewanella amazonensis (strain ATCC BAA-1098 / SB2B)).